The following is a 303-amino-acid chain: Dihydroorotate dehydrogenase B (NAD(+)), catalytic subunit (303 aa).

FMN is bound by residues serine 21 and lysine 45–glycine 46. Substrate-binding positions include lysine 45 and asparagine 69 to leucine 73. The FMN site is built by asparagine 99 and asparagine 127. Asparagine 127 is a substrate binding site. Cysteine 130 serves as the catalytic Nucleophile. FMN is bound by residues lysine 165 and isoleucine 191. Asparagine 192 to threonine 193 contacts substrate. FMN-binding positions include glycine 217, glycine 243–glycine 244, and glycine 265–threonine 266.

The protein belongs to the dihydroorotate dehydrogenase family. Type 1 subfamily. Heterotetramer of 2 PyrK and 2 PyrD type B subunits. FMN serves as cofactor.

Its subcellular location is the cytoplasm. The enzyme catalyses (S)-dihydroorotate + NAD(+) = orotate + NADH + H(+). Its pathway is pyrimidine metabolism; UMP biosynthesis via de novo pathway; orotate from (S)-dihydroorotate (NAD(+) route): step 1/1. Functionally, catalyzes the conversion of dihydroorotate to orotate with NAD(+) as electron acceptor. In Phocaeicola vulgatus (strain ATCC 8482 / DSM 1447 / JCM 5826 / CCUG 4940 / NBRC 14291 / NCTC 11154) (Bacteroides vulgatus), this protein is Dihydroorotate dehydrogenase B (NAD(+)), catalytic subunit (pyrD).